Consider the following 143-residue polypeptide: Sporulation-specific cell division protein SsgB (143 aa).

The protein belongs to the SsgA family. Interacts with SsgA. Interacts with FtsZ (via N-terminus).

The protein localises to the cell septum. Involved in sporulation-specific cell division. Required for early stages of sporulation. Important in the process of growth cessation prior to sporulation-specific cell division. Recruits cell division protein FtsZ to the future septum sites and tethers the contractile ring structure (Z ring) to the cytoplasmic membrane during sporulation. Stimulates polymerization and filament length of FtsZ in vitro. The sequence is that of Sporulation-specific cell division protein SsgB from Salinispora tropica (strain ATCC BAA-916 / DSM 44818 / JCM 13857 / NBRC 105044 / CNB-440).